Consider the following 587-residue polypeptide: Arginine--tRNA ligase (587 aa).

Residues 126 to 136 carry the 'HIGH' region motif; that stretch reads ANPTGPLHVGH.

It belongs to the class-I aminoacyl-tRNA synthetase family. As to quaternary structure, monomer.

It localises to the cytoplasm. It carries out the reaction tRNA(Arg) + L-arginine + ATP = L-arginyl-tRNA(Arg) + AMP + diphosphate. This Aromatoleum aromaticum (strain DSM 19018 / LMG 30748 / EbN1) (Azoarcus sp. (strain EbN1)) protein is Arginine--tRNA ligase.